Here is a 180-residue protein sequence, read N- to C-terminus: Nudix hydrolase 16, mitochondrial (180 aa).

The Nudix hydrolase domain occupies 18 to 162 (GSRLVAGCIP…WMKDALVEGF (145 aa)). Position 60 (F60) interacts with substrate. The Mn(2+) site is built by G63, E78, E82, and E144. Positions 63–84 (GGWENDETVREAAAREAVEEAG) match the Nudix box motif.

Belongs to the Nudix hydrolase family. Requires Mg(2+) as cofactor. It depends on Mn(2+) as a cofactor. As to expression, expressed in roots, leaves, stems and inflorescences.

Its subcellular location is the mitochondrion. Probably mediates the hydrolysis of some nucleoside diphosphate derivatives. This Arabidopsis thaliana (Mouse-ear cress) protein is Nudix hydrolase 16, mitochondrial (NUDT16).